The sequence spans 133 residues: Transmembrane protein 60 (133 aa).

Helical transmembrane passes span 5-25 (LAQR…MLVL), 35-55 (WFLI…MLIV), 78-98 (AWYL…CAKL), and 110-130 (FIPL…NVFF).

It localises to the membrane. The sequence is that of Transmembrane protein 60 (Tmem60) from Mus musculus (Mouse).